The primary structure comprises 137 residues: uncharacterized protein (137 aa).

To E.coli YfdK.

This is an uncharacterized protein from Escherichia coli (strain K12).